We begin with the raw amino-acid sequence, 181 residues long: Ion-translocating oxidoreductase complex subunit B (181 aa).

The tract at residues 1-26 is hydrophobic; it reads MLEAVSAVMSLGGMALFAGLGLGYAA. In terms of domain architecture, 4Fe-4S spans 32–90; sequence EADPVVEKLEALLPATNCGMCGHPGCGPYAQAITEGEAINLCTPGGKAVMESIAAMLGV. Positions 49, 52, 57, 73, 110, 113, 116, 120, 140, 143, 146, and 150 each coordinate [4Fe-4S] cluster. 2 4Fe-4S ferredoxin-type domains span residues 101 to 130 and 131 to 160; these read KVAY…GANK and QSHT…MQPV.

This sequence belongs to the 4Fe4S bacterial-type ferredoxin family. RnfB subfamily. The complex is composed of six subunits: RnfA, RnfB, RnfC, RnfD, RnfE and RnfG. It depends on [4Fe-4S] cluster as a cofactor.

It is found in the cell inner membrane. In terms of biological role, part of a membrane-bound complex that couples electron transfer with translocation of ions across the membrane. This Magnetococcus marinus (strain ATCC BAA-1437 / JCM 17883 / MC-1) protein is Ion-translocating oxidoreductase complex subunit B.